The primary structure comprises 428 residues: uncharacterized protein (428 aa).

10 helical membrane-spanning segments follow: residues 26–46, 51–71, 90–110, 135–155, 177–197, 223–243, 278–298, 314–334, 359–379, and 407–427; these read VALTCAAIMVGAGIVGSDDVF, AGIDWDVIFLLLGMMIIVSVL, AAPLRIMILLVLVTALGSALL, TPFLVAEVFASNVGGAATLVG, MAPAVLVVMIALIGLLPWLLG, LLIKCGVVLVLVFAAFIAHPV, TLLFFAGLFVMVGALVKTGVV, LLTVGLILGISAPVSGIIDNI, TFWWALALSADFGGNLTAVAA, and VVTAVSLVLSAVYLWLRYFVF.

Belongs to the CitM (TC 2.A.11) transporter family.

The protein resides in the cell membrane. This is an uncharacterized protein from Mycobacterium tuberculosis (strain CDC 1551 / Oshkosh).